Reading from the N-terminus, the 76-residue chain is Kappa-actitoxin-Avd4d (76 aa).

The N-terminal stretch at 1–19 (MNKALFLCLVVLCAAVVFA) is a signal peptide. Residues 20–31 (AEDLQKAKHVPF) constitute a propeptide that is removed on maturation. Intrachain disulfides connect Cys-37-Cys-72, Cys-39-Cys-65, and Cys-55-Cys-73.

It belongs to the sea anemone type 3 (BDS) potassium channel toxin family. In terms of tissue distribution, moderately expressed in the ectodermal tissue from the distal and proximal tentacles, body wall, and oral disk.

It localises to the secreted. The protein localises to the nematocyst. Blocks Kv3 voltage-gated potassium channels. Reduces blood pressure. The sequence is that of Kappa-actitoxin-Avd4d from Anemonia viridis (Snakelocks anemone).